The chain runs to 326 residues: 3-methyl-2-oxobutanoate hydroxymethyltransferase 1 (326 aa).

Mg(2+)-binding residues include Asp-52, Asp-91, and Glu-122. Residues 52–53 (DS) and Asp-91 each bind 3-methyl-2-oxobutanoate. Residue Glu-189 is the Proton acceptor of the active site.

The protein belongs to the PanB family. In terms of assembly, homodecamer; pentamer of dimers. Mg(2+) serves as cofactor.

The protein localises to the cytoplasm. It carries out the reaction 3-methyl-2-oxobutanoate + (6R)-5,10-methylene-5,6,7,8-tetrahydrofolate + H2O = 2-dehydropantoate + (6S)-5,6,7,8-tetrahydrofolate. The protein operates within cofactor biosynthesis; (R)-pantothenate biosynthesis; (R)-pantoate from 3-methyl-2-oxobutanoate: step 1/2. In terms of biological role, catalyzes the reversible reaction in which hydroxymethyl group from 5,10-methylenetetrahydrofolate is transferred onto alpha-ketoisovalerate to form ketopantoate. This is 3-methyl-2-oxobutanoate hydroxymethyltransferase 1 from Bradyrhizobium diazoefficiens (strain JCM 10833 / BCRC 13528 / IAM 13628 / NBRC 14792 / USDA 110).